The sequence spans 473 residues: Adenosylhomocysteinase (473 aa).

Residues Thr64, Asp139, and Glu199 each coordinate substrate. 200–202 (TTT) provides a ligand contact to NAD(+). Substrate is bound by residues Lys229 and Asp233. NAD(+)-binding positions include Asn234, 263–268 (GYGDVG), Glu286, Asn321, 342–344 (IGH), and Asn387.

It belongs to the adenosylhomocysteinase family. NAD(+) is required as a cofactor.

The protein localises to the cytoplasm. It catalyses the reaction S-adenosyl-L-homocysteine + H2O = L-homocysteine + adenosine. It participates in amino-acid biosynthesis; L-homocysteine biosynthesis; L-homocysteine from S-adenosyl-L-homocysteine: step 1/1. Functionally, may play a key role in the regulation of the intracellular concentration of adenosylhomocysteine. This is Adenosylhomocysteinase from Paraburkholderia phymatum (strain DSM 17167 / CIP 108236 / LMG 21445 / STM815) (Burkholderia phymatum).